Consider the following 546-residue polypeptide: Calcitonin receptor-like protein 1 (546 aa).

Residues 1-171 (MADATSPFNV…EVARNARKLE (171 aa)) are Cytoplasmic-facing. A helical membrane pass occupies residues 172–192 (FVGLGLSLVSLILAISIFSYF). Topologically, residues 193–205 (RRLRVFRNLLHLH) are extracellular. A helical transmembrane segment spans residues 206-226 (LMIAMLMVVILRLVLYIDLIF). The Cytoplasmic portion of the chain corresponds to 227 to 251 (TGENGPHTNSAEGKTINTMPIVCEG). The helical transmembrane segment at 252–272 (MFFFLEYFKTVTFCWMFLEGI) threads the bilayer. Residues 273 to 292 (YLNNQIVFGFFNSEPKLLPY) lie on the Extracellular side of the membrane. Residues 293–313 (FIAGYGIPLVHTMLWLLVVLI) traverse the membrane as a helical segment. The Cytoplasmic portion of the chain corresponds to 314–333 (KKDFKVERCLGSYYLEPEFW). A helical membrane pass occupies residues 334–354 (ILDGPRMAELVINLFFICNVI). Residues 355-377 (RVLYSKVRESNNTSEAGLKKSVK) lie on the Extracellular side of the membrane. Asparagine 365 and asparagine 366 each carry an N-linked (GlcNAc...) asparagine glycan. Residues 378–398 (AAMMLLPLLGVPNIMQTIPFA) traverse the membrane as a helical segment. The Cytoplasmic portion of the chain corresponds to 399–403 (PTRDN). The helical transmembrane segment at 404 to 424 (IMVFAVWTYTASFTYMYQGLM) threads the bilayer. Topologically, residues 425 to 546 (VASIYCFTNK…EGSNRSTKSP (122 aa)) are extracellular. Asparagine 472 and asparagine 476 each carry an N-linked (GlcNAc...) asparagine glycan. Residues 472-546 (NGTANASAPQ…EGSNRSTKSP (75 aa)) are disordered. Over residues 473–485 (GTANASAPQTNNA) the composition is skewed to polar residues. Basic and acidic residues predominate over residues 500 to 520 (KGSDDSTTKLMKDAVMEEEKN). Residue asparagine 540 is glycosylated (N-linked (GlcNAc...) asparagine).

It belongs to the G-protein coupled receptor 2 family. In terms of tissue distribution, expression was observed in the mechanosensory neuron pairs PLM, ALM, FLP, OLQD, and OLQV, the chemosensory neurons PHA, PHB, RMEV, the ring motor neurons RMED, and the pharyngeal interneuron pair I1. Expression in sensory neurons PHA, PQR and URY are responsible for mate searching behavior. Expressed in AIY, RIM, RIA, and other neurons.

The protein localises to the cell membrane. Functionally, G-protein coupled receptor for PDF neuropeptides. Plays a role in responses to environmental signals, including chemicals and touch, and in modulating locomotory behaviors. Capable of transducing signals via an adenylate cyclase acy-1 cAMP-dependent pathway. Required to regulate the sex-specific expression of TGFbeta-like daf-7 in the ASJ chemosensory neurons, perhaps acting via acy-1. Involved in modulating mate searching behavior independent of nutritional status. In the presence of food, plays a role in initiating and extending exploratory roaming behavior, perhaps acting in AIY, RIM, RIA, and other neurons, in opposition to 5-hydroxytryptamine (serotonin) signaling. Involved in mediating arousal from the sleep-like state called lethargus, which occurs during molting between larval and adult stages, in part by regulating touch sensitivity. May play a role in circadian rhythms of locomotor activity. In terms of biological role, G-protein coupled receptor which is activated by neuropeptides PDF-1 and PDF-2. Probably acts through the G-alpha(s) type of G proteins to elevate cAMP levels. G-protein coupled receptor which is activated by neuropeptides PDF-1 and PDF-2; however, activation is lower compared to isoforms a and b. Probably inhibits cAMP levels through the G-alpha(i/o) type of G proteins. The protein is Calcitonin receptor-like protein 1 (pdfr-1) of Caenorhabditis elegans.